Reading from the N-terminus, the 395-residue chain is RNA ligase 1 (395 aa).

The ATP site is built by Tyr48, Arg65, and Lys83. Catalysis depends on Lys113, which acts as the N6-AMP-lysine intermediate. Positions 173, 255, and 257 each coordinate ATP. Asp285 contributes to the Mg(2+) binding site.

It depends on Mg(2+) as a cofactor. Mn(2+) is required as a cofactor.

The enzyme catalyses ATP + (ribonucleotide)n-3'-hydroxyl + 5'-phospho-(ribonucleotide)m = (ribonucleotide)n+m + AMP + diphosphate.. RNA ligase that ligates single-stranded nucleic acids in an ATP-dependent manner. Catalyzes both inter- and intra-molecular single-stranded DNA (ssDNA) ligation to &gt;50% completion in a matter of hours at an elevated temperature, although favoring intra-molecular ligation on RNA and single-stranded DNA substrates. Is able to catalyze the adenylation reaction of ssDNA 3'-terminal phosphate (ssDNA 3'p) to 3'-adenylated DNA (ssDNA 3'pp5'A). Does not have significant 3'-adenylation activity with a 3'-phosphorylated nicked dsDNA substrate. In Thermus scotoductus, this protein is RNA ligase 1.